Consider the following 221-residue polypeptide: Ethylene-inducing xylanase 4 (221 aa).

An N-terminal signal peptide occupies residues 1 to 19 (MVSFSTLLTACTAITGALG). Residues 28–218 (NVTPNAQGTH…SAGRASVVVE (191 aa)) form the GH11 domain. Asn96 carries N-linked (GlcNAc...) asparagine glycosylation. The Nucleophile role is filled by Glu114. Residue Glu205 is the Proton donor of the active site.

It belongs to the glycosyl hydrolase 11 (cellulase G) family.

It carries out the reaction Endohydrolysis of (1-&gt;4)-beta-D-xylosidic linkages in xylans.. It functions in the pathway glycan degradation; xylan degradation. Endo-1,4-beta-xylanase involved in the hydrolysis of xylan, a major structural heterogeneous polysaccharide found in plant biomass representing the second most abundant polysaccharide in the biosphere, after cellulose. May act as an elicitor of plant defense responses in certain plants but does not exhibit any cell death when transiently expressed in N.benthamiana. The chain is Ethylene-inducing xylanase 4 from Verticillium dahliae (strain VdLs.17 / ATCC MYA-4575 / FGSC 10137) (Verticillium wilt).